A 333-amino-acid chain; its full sequence is Holliday junction branch migration complex subunit RuvB (333 aa).

The tract at residues 1 to 182 is large ATPase domain (RuvB-L); it reads MDERLLSGES…FGVLSRLEYY (182 aa). ATP is bound by residues L21, R22, G63, K66, T67, T68, 129–131, R172, Y182, and R219; that span reads EDF. T67 contributes to the Mg(2+) binding site. A small ATPAse domain (RuvB-S) region spans residues 183 to 253; it reads TVDQLSEIVE…ITQMALELLQ (71 aa). Residues 256–333 form a head domain (RuvB-H) region; that stretch reads KLGLDHIDHK…EHFGMEMPKV (78 aa). Positions 311 and 316 each coordinate DNA.

The protein belongs to the RuvB family. In terms of assembly, homohexamer. Forms an RuvA(8)-RuvB(12)-Holliday junction (HJ) complex. HJ DNA is sandwiched between 2 RuvA tetramers; dsDNA enters through RuvA and exits via RuvB. An RuvB hexamer assembles on each DNA strand where it exits the tetramer. Each RuvB hexamer is contacted by two RuvA subunits (via domain III) on 2 adjacent RuvB subunits; this complex drives branch migration. In the full resolvosome a probable DNA-RuvA(4)-RuvB(12)-RuvC(2) complex forms which resolves the HJ.

It localises to the cytoplasm. The catalysed reaction is ATP + H2O = ADP + phosphate + H(+). In terms of biological role, the RuvA-RuvB-RuvC complex processes Holliday junction (HJ) DNA during genetic recombination and DNA repair, while the RuvA-RuvB complex plays an important role in the rescue of blocked DNA replication forks via replication fork reversal (RFR). RuvA specifically binds to HJ cruciform DNA, conferring on it an open structure. The RuvB hexamer acts as an ATP-dependent pump, pulling dsDNA into and through the RuvAB complex. RuvB forms 2 homohexamers on either side of HJ DNA bound by 1 or 2 RuvA tetramers; 4 subunits per hexamer contact DNA at a time. Coordinated motions by a converter formed by DNA-disengaged RuvB subunits stimulates ATP hydrolysis and nucleotide exchange. Immobilization of the converter enables RuvB to convert the ATP-contained energy into a lever motion, pulling 2 nucleotides of DNA out of the RuvA tetramer per ATP hydrolyzed, thus driving DNA branch migration. The RuvB motors rotate together with the DNA substrate, which together with the progressing nucleotide cycle form the mechanistic basis for DNA recombination by continuous HJ branch migration. Branch migration allows RuvC to scan DNA until it finds its consensus sequence, where it cleaves and resolves cruciform DNA. This Bacillus cereus (strain ATCC 10987 / NRS 248) protein is Holliday junction branch migration complex subunit RuvB.